Reading from the N-terminus, the 208-residue chain is MARYIGPSCKLARREGADLSLKSPSRALDSKCKLEQRPGQHGAVRKSKLSDYASQLREKQKVKRIYGVLERQFRNYYKNASTKKGNTGENLLQLLETRLDNVIYRMGFAVTRPAARQLVSHRGVLVNGKIVNLPSYHVKPGDIVALSQRAQKYLCVQESLTIKDQHGSAFSWVEVDSEKFSGVFKALPDRADLPSDINEALIVELYSK.

The region spanning 97–158 (TRLDNVIYRM…RAQKYLCVQE (62 aa)) is the S4 RNA-binding domain.

It belongs to the universal ribosomal protein uS4 family. Part of the 30S ribosomal subunit. Contacts protein S5. The interaction surface between S4 and S5 is involved in control of translational fidelity.

Functionally, one of the primary rRNA binding proteins, it binds directly to 16S rRNA where it nucleates assembly of the body of the 30S subunit. Its function is as follows. With S5 and S12 plays an important role in translational accuracy. The protein is Small ribosomal subunit protein uS4 of Xylella fastidiosa (strain M12).